A 108-amino-acid polypeptide reads, in one-letter code: Protein S100-A15A (108 aa).

One can recognise an EF-hand domain in the interval lysine 53–aspartate 88. 5 residues coordinate Ca(2+): aspartate 66, asparagine 68, aspartate 70, glutamine 72, and glutamate 77.

The protein belongs to the S-100 family.

The polypeptide is Protein S100-A15A (S100A15A) (Gorilla gorilla gorilla (Western lowland gorilla)).